The following is a 156-amino-acid chain: MPRKGPVAKRDVLPDPMYNSKLVTRLINKMMVDGKKGKSQTILYNAFEIVRERSDKEPMEVFEQALKNIMPVLEVRARRVGGANYQVPVEVRPERRTTLGLRWLVNYARLRGEKTMEERLAYEILDASNNAGAAVKKREDTHKMAEANKAFAHYRW.

This sequence belongs to the universal ribosomal protein uS7 family. Part of the 30S ribosomal subunit. Contacts proteins S9 and S11.

In terms of biological role, one of the primary rRNA binding proteins, it binds directly to 16S rRNA where it nucleates assembly of the head domain of the 30S subunit. Is located at the subunit interface close to the decoding center, probably blocks exit of the E-site tRNA. This is Small ribosomal subunit protein uS7 from Bacillus mycoides (strain KBAB4) (Bacillus weihenstephanensis).